The chain runs to 220 residues: MGQKIHPLGFRLGTTQNHCSYWFAQSKKIYSKLVKEDKEIRNCIEKYVQKHTNNPFHYGGIARIEIYRKTDLIRVEIHMGFTDLLTENGGIRFEQLKSNIEKIVNSKNQKLCLILIKIDKPYTEPKVLAEYIALQLENRVVFRKAVKKALELAGNFKNKGGIKIQIAGRLNGIEIARVEWTREGRVPLQTIRAHINYYYYPAKTIYGILGIKVWIYQNDE.

In terms of domain architecture, KH type-2 spans 48-119 (VQKHTNNPFH…KLCLILIKID (72 aa)).

It belongs to the universal ribosomal protein uS3 family. Part of the 30S ribosomal subunit.

It localises to the plastid. The protein localises to the chloroplast. The polypeptide is Small ribosomal subunit protein uS3c (rps3) (Psilotum nudum (Whisk fern)).